A 215-amino-acid polypeptide reads, in one-letter code: ER lumen protein-retaining receptor B (215 aa).

6 helical membrane-spanning segments follow: residues 6–26 (LAGDMTHLASVLVLLLKIHTI), 55–77 (FVSLYNTSMKLVFLGSSFSIVWY), 98–118 (WFLVLPCFLLALLIHEKFTFL), 120–140 (VLWTSSLYLEAVAILPQLVLL), 149–169 (LTGQYIFLLGGYRGLYILNWI), and 178–198 (FVHWITWIAGFVQTLLYADFF).

It belongs to the ERD2 family.

It localises to the golgi apparatus membrane. The protein resides in the endoplasmic reticulum membrane. In terms of biological role, determines the specificity of the luminal endoplasmic reticulum protein retention system. Required for the retro-transport of calreticulin-3 (CRT3) from the Golgi to the ER. Specifically required for elongation factor Tu receptor (EFR) function in response to the pathogen-associated molecular pattern (PAMP) elf18. The protein is ER lumen protein-retaining receptor B (ERD2B) of Arabidopsis thaliana (Mouse-ear cress).